Here is a 247-residue protein sequence, read N- to C-terminus: Acyl-coenzyme A thioesterase THEM5 (247 aa).

The active-site Proton donor/acceptor is the D167.

It belongs to the THEM4/THEM5 thioesterase family. Homodimer.

The protein localises to the mitochondrion matrix. It catalyses the reaction hexadecanoyl-CoA + H2O = hexadecanoate + CoA + H(+). The enzyme catalyses (9Z,12Z)-octadecadienoyl-CoA + H2O = (9Z,12Z)-octadecadienoate + CoA + H(+). The catalysed reaction is tetradecanoyl-CoA + H2O = tetradecanoate + CoA + H(+). It carries out the reaction (9Z)-octadecenoyl-CoA + H2O = (9Z)-octadecenoate + CoA + H(+). It catalyses the reaction (9Z)-hexadecenoyl-CoA + H2O = (9Z)-hexadecenoate + CoA + H(+). The enzyme catalyses (5Z,8Z,11Z,14Z)-eicosatetraenoyl-CoA + H2O = (5Z,8Z,11Z,14Z)-eicosatetraenoate + CoA + H(+). The catalysed reaction is octadecanoyl-CoA + H2O = octadecanoate + CoA + H(+). In terms of biological role, has acyl-CoA thioesterase activity towards long-chain (C16 and C18) fatty acyl-CoA substrates, with a preference for linoleoyl-CoA and other unsaturated long-chain fatty acid-CoA esters. Plays an important role in mitochondrial fatty acid metabolism, and in remodeling of the mitochondrial lipid cardiolipin. Required for normal mitochondrial function. This chain is Acyl-coenzyme A thioesterase THEM5 (THEM5), found in Homo sapiens (Human).